Consider the following 247-residue polypeptide: Mast cell protease 2 (247 aa).

Residues 1 to 19 form the signal peptide; it reads MHLLALHLLLFLLGSRAKA. The propeptide at 20 to 21 is activation peptide; the sequence is GE. The 224-residue stretch at 22–245 folds into the Peptidase S1 domain; sequence IIGGTECKPH…YRPWINKILR (224 aa). A disulfide bridge links Cys51 with Cys67. The Charge relay system role is filled by His66. N-linked (GlcNAc...) asparagine glycosylation occurs at Asn80. The active-site Charge relay system is Asp110. 2 cysteine pairs are disulfide-bonded: Cys144–Cys209 and Cys175–Cys188. Residue Ser203 is the Charge relay system of the active site.

The protein belongs to the peptidase S1 family. Granzyme subfamily.

This Meriones unguiculatus (Mongolian jird) protein is Mast cell protease 2.